The primary structure comprises 150 residues: Copper transporter 3 (150 aa).

A run of 2 helical transmembrane segments spans residues 50–70 (GGMYALALAAVFALAVLLEFL) and 100–120 (LAYLLMLALMSFNVGVLLAAV).

The protein belongs to the copper transporter (Ctr) (TC 1.A.56) family. SLC31A subfamily.

It localises to the membrane. In terms of biological role, involved in the transport of copper. The sequence is that of Copper transporter 3 (COPT3) from Oryza sativa subsp. japonica (Rice).